We begin with the raw amino-acid sequence, 369 residues long: Mycofactocin maturase MftC (369 aa).

The region spanning 16 to 232 (LDAPICLTWE…KGERVLTGDS (217 aa)) is the Radical SAM core domain. Positions 30, 34, 37, 251, 258, 269, 310, 313, 319, 323, and 341 each coordinate [4Fe-4S] cluster. Residues 347–369 (APALAQERHAPRPRVDHSRGSRE) are disordered. Residues 352-369 (QERHAPRPRVDHSRGSRE) are compositionally biased toward basic and acidic residues.

The protein belongs to the radical SAM superfamily. MftC family. As to quaternary structure, interacts with MftB. Requires [4Fe-4S] cluster as cofactor.

The enzyme catalyses [mycofactocin precursor peptide]-C-terminal glycyl-L-valyl-L-tyrosine + S-adenosyl-L-methionine = [mycofactocin precursor peptide]-C-terminal glycyl-N-{[2-(4-hydroxyphenyl)ethenyl]-3-methylbutanamide} + 5'-deoxyadenosine + L-methionine + CO2. It carries out the reaction [mycofactocin precursor peptide]-C-terminal glycyl-N-{[2-(4-hydroxyphenyl)ethenyl]-3-methylbutanamide} + AH2 + S-adenosyl-L-methionine = [mycofactocin precursor peptide]-C-terminal glycyl-N-{5-[(4-hydroxyphenyl)methyl]-4,4-dimethyl-2-oxopyrrolidin-3-yl}acetamide + 5'-deoxyadenosine + L-methionine + A + H(+). Radical S-adenosylmethionine (SAM) enzyme responsible for the first step of the biosynthesis of the enzyme cofactor mycofactocin (MFT). Catalyzes two reactions at the C-terminus of the mycofactocin precursor (the MftA peptide). The first one is the oxidative decarboxylation of the C-terminal L-tyrosine of MftA, forming an unsaturated tyramine moiety. The second reaction is the cross-linking of the tyramine with the penultimate L-valine residue, forming a five-membered lactam ring. Its activity requires the presence of the MftB chaperone. This is Mycofactocin maturase MftC from Mycobacterium ulcerans (strain Agy99).